The primary structure comprises 529 residues: CTP synthase (529 aa).

The amidoligase domain stretch occupies residues 1–267 (MKEAKFIFVT…DTQILEHFHL (267 aa)). Residue serine 15 coordinates CTP. Serine 15 provides a ligand contact to UTP. ATP contacts are provided by residues 16–21 (SLGKGL) and aspartate 73. 2 residues coordinate Mg(2+): aspartate 73 and glutamate 141. CTP is bound by residues 148–150 (DIE), 188–193 (KTKPTQ), and lysine 224. UTP-binding positions include 188 to 193 (KTKPTQ) and lysine 224. The Glutamine amidotransferase type-1 domain occupies 292-529 (TVSIVGKYTE…SFVKAAIDKK (238 aa)). Glycine 354 is a binding site for L-glutamine. The active-site Nucleophile; for glutamine hydrolysis is cysteine 381. Residues 382-385 (LGMQ), glutamate 405, and arginine 459 each bind L-glutamine. Active-site residues include histidine 504 and glutamate 506.

Belongs to the CTP synthase family. In terms of assembly, homotetramer.

It catalyses the reaction UTP + L-glutamine + ATP + H2O = CTP + L-glutamate + ADP + phosphate + 2 H(+). The catalysed reaction is L-glutamine + H2O = L-glutamate + NH4(+). It carries out the reaction UTP + NH4(+) + ATP = CTP + ADP + phosphate + 2 H(+). Its pathway is pyrimidine metabolism; CTP biosynthesis via de novo pathway; CTP from UDP: step 2/2. Its activity is regulated as follows. Allosterically activated by GTP, when glutamine is the substrate; GTP has no effect on the reaction when ammonia is the substrate. The allosteric effector GTP functions by stabilizing the protein conformation that binds the tetrahedral intermediate(s) formed during glutamine hydrolysis. Inhibited by the product CTP, via allosteric rather than competitive inhibition. Its function is as follows. Catalyzes the ATP-dependent amination of UTP to CTP with either L-glutamine or ammonia as the source of nitrogen. Regulates intracellular CTP levels through interactions with the four ribonucleotide triphosphates. This chain is CTP synthase, found in Wolbachia pipientis wMel.